The primary structure comprises 479 residues: T-box transcription factor TBX1 (479 aa).

Low complexity-rich tracts occupy residues 15 to 31 (ASSL…ADPF) and 59 to 86 (YPFA…AAAV). A disordered region spans residues 15–86 (ASSLSGLGSP…GPGASRAAAV (72 aa)). Residues 108–286 (LWDEFNQLGT…SNPFAKGFRD (179 aa)) constitute a DNA-binding region (T-box). Residues 311-398 (RNPVASPTQP…APGASEPLHH (88 aa)) form a disordered region. A compositionally biased stretch (polar residues) spans 313-322 (PVASPTQPNG). Residues 323–338 (SDKDAAEARREFDRDS) are compositionally biased toward basic and acidic residues. The Nuclear localization signal motif lies at 415–426 (KSRPAPYPLPGL).

In terms of assembly, binds DNA as a dimer. Interacts with DSCR6. Interacts with NKX2-5. In terms of tissue distribution, expressed in skeletal muscle, lung and testis. Highly expressed in hair follicle stem cell, but not in terminally differentiating cells.

Its subcellular location is the nucleus. Functionally, transcription factor that plays a key role in cardiovascular development by promoting pharyngeal arch segmentation during embryonic development. Also involved in craniofacial muscle development. Together with NKX2-5, acts as a regulator of asymmetric cardiac morphogenesis by promoting expression of PITX2. Acts upstream of TBX1 for the formation of the thymus and parathyroid glands from the third pharyngeal pouch. Required for hair follicle stem cell self-renewal. Binds to the palindromic T site 5'-TTCACACCTAGGTGTGAA-3' DNA sequence. This chain is T-box transcription factor TBX1, found in Mus musculus (Mouse).